We begin with the raw amino-acid sequence, 219 residues long: Probable N-acetyltransferase camello (219 aa).

The next 2 helical transmembrane spans lie at 42–62 and 64–84; these read FYFI…SYVL and LTSL…EFHG. The N-acetyltransferase domain maps to 62–218; sequence LSLTSLVALL…TVIYYRYDIK (157 aa).

This sequence belongs to the camello family. As to expression, at the beginning of gastrulation, expressed in deep cells of the presumptive mesoderm. At later gastrulation stages, expressed at the interface between already involuted and preinvoluted mesoderm. At late neurula and tailbud stages, expressed in the deep mass of cells lying ventrally and laterally to the closed blastopore.

It localises to the golgi apparatus membrane. Plays a role in regulation of gastrulation, possibly by controlled reduction of cell adhesion which is necessary for optimal cell motility. This chain is Probable N-acetyltransferase camello, found in Xenopus laevis (African clawed frog).